The following is a 398-amino-acid chain: MKLEKLPEEFVQAKPVLEKIIEHGFEAYFVGGSVRDILLGREIHDVDIATSAYPEEIKDIFPYTIDVGIEHGTVLVLAGKSEAEHYEITTFRTESKYTDYRRPDHVDFVRDLREDLKRRDFTINAFACDVNGQIIDLFDGLTDLKERRLTAVGSALERFNEDALRIMRAMRFAATLDFQIENKTFLAMCESAHLLEKISVERIFIEFDKLLLGQDWRNGLTLLLKSGAYKYLPDLQDSALKKVLTDLSVDFHFQNSEQAWAALLTRFSNVDVKTFLRKWKVSNEFAKFVADLVSAYELDSWDLMSLYHFGLEKVLLVDELKVAYGLKINREQAVTINNQLQIHDKSEIVIAGKDLMEEFSLEPGPELGKILKIIEEKIVKNELKNEQAAIFAEVKKML.

Gly-32 and Arg-35 together coordinate ATP. 2 residues coordinate CTP: Gly-32 and Arg-35. Mg(2+)-binding residues include Asp-45 and Asp-47. Arg-119, Asp-162, Arg-165, Arg-168, and Arg-171 together coordinate ATP. Residues Arg-119, Asp-162, Arg-165, Arg-168, and Arg-171 each coordinate CTP.

It belongs to the tRNA nucleotidyltransferase/poly(A) polymerase family. Bacterial CCA-adding enzyme type 3 subfamily. In terms of assembly, homodimer. The cofactor is Mg(2+).

The catalysed reaction is a tRNA precursor + 2 CTP + ATP = a tRNA with a 3' CCA end + 3 diphosphate. The enzyme catalyses a tRNA with a 3' CCA end + 2 CTP + ATP = a tRNA with a 3' CCACCA end + 3 diphosphate. Catalyzes the addition and repair of the essential 3'-terminal CCA sequence in tRNAs without using a nucleic acid template. Adds these three nucleotides in the order of C, C, and A to the tRNA nucleotide-73, using CTP and ATP as substrates and producing inorganic pyrophosphate. tRNA 3'-terminal CCA addition is required both for tRNA processing and repair. Also involved in tRNA surveillance by mediating tandem CCA addition to generate a CCACCA at the 3' terminus of unstable tRNAs. While stable tRNAs receive only 3'-terminal CCA, unstable tRNAs are marked with CCACCA and rapidly degraded. The chain is CCA-adding enzyme from Lactococcus lactis subsp. lactis (strain IL1403) (Streptococcus lactis).